A 178-amino-acid chain; its full sequence is Protein GrpE (178 aa).

This sequence belongs to the GrpE family. Homodimer.

The protein localises to the cytoplasm. Functionally, participates actively in the response to hyperosmotic and heat shock by preventing the aggregation of stress-denatured proteins, in association with DnaK and GrpE. It is the nucleotide exchange factor for DnaK and may function as a thermosensor. Unfolded proteins bind initially to DnaJ; upon interaction with the DnaJ-bound protein, DnaK hydrolyzes its bound ATP, resulting in the formation of a stable complex. GrpE releases ADP from DnaK; ATP binding to DnaK triggers the release of the substrate protein, thus completing the reaction cycle. Several rounds of ATP-dependent interactions between DnaJ, DnaK and GrpE are required for fully efficient folding. This chain is Protein GrpE, found in Rickettsia prowazekii (strain Madrid E).